A 182-amino-acid chain; its full sequence is Probable RNA 2'-phosphotransferase (182 aa).

This sequence belongs to the KptA/TPT1 family.

Functionally, removes the 2'-phosphate from RNA via an intermediate in which the phosphate is ADP-ribosylated by NAD followed by a presumed transesterification to release the RNA and generate ADP-ribose 1''-2''-cyclic phosphate (APPR&gt;P). May function as an ADP-ribosylase. The chain is Probable RNA 2'-phosphotransferase from Flavobacterium johnsoniae (strain ATCC 17061 / DSM 2064 / JCM 8514 / BCRC 14874 / CCUG 350202 / NBRC 14942 / NCIMB 11054 / UW101) (Cytophaga johnsonae).